The sequence spans 513 residues: MLENTAIIIAITTGFVAFIGGYFLRKLLGEMKITSAEERARLVLEEAAKEAESKKREAVVEAKEEILKLRNEVERESRERRSELQRQERRLVQKEESLDRKLEALEKKEENLAKRETELAKMHEELKALHQKELQELERISGLSTEEARQILLQDVEKEIQQEAALLVKEIEGRAKEEADRRARNIISLAIQRCAADHVAESTVAVIPLPNEEMKGRIIGREGRNIRAFETLTGVDLIIDDTPEAVIVSGFDPIRRETARMALEKLISDGRIHPARIEEMVEKARKDMEVQIRDTGEQAAFDANVHGLHPDLIKLLGRLKYRTSYGQNVLKHSVEVAYLAGLMAAELRADEKLARRAGLLHDVGKAVDHEVEGPHVTIGVDLAKKYGESPEVLHAIAAHHGDEEPETVEAVLIQAADAISAARPGARRETLEAYVKRLTKLEDIANSFPGVEKAFAIQAGREIRIMVKPDKVDDLGAVRLVRDIARKIENELEYPGQIKVVIIRETRVVEYAK.

A helical membrane pass occupies residues 4–24; the sequence is NTAIIIAITTGFVAFIGGYFL. The 64-residue stretch at 203–266 folds into the KH domain; sequence TVAVIPLPNE…ETARMALEKL (64 aa). The 94-residue stretch at 329 to 422 folds into the HD domain; the sequence is VLKHSVEVAY…IQAADAISAA (94 aa).

Belongs to the RNase Y family.

The protein resides in the cell membrane. Functionally, endoribonuclease that initiates mRNA decay. The chain is Ribonuclease Y from Desulforudis audaxviator (strain MP104C).